Consider the following 189-residue polypeptide: WASH complex subunit homolog 3 (189 aa).

Positions 35-74 (MTEMLNNFGNKMEDILEKAEQSLDTADRKLRLMESKLAGM) form a coiled coil. Disordered stretches follow at residues 76–101 (LEDK…NPSS) and 150–189 (SEGV…SDSD). The segment covering 150–165 (SEGVDPSILKRGDEPS) has biased composition (basic and acidic residues). Residues 167 to 189 (PQAQTSRNYESSGESTASFSDSD) are compositionally biased toward polar residues. Residue Thr-182 is modified to Phosphothreonine.

This sequence belongs to the CCDC53 family. As to quaternary structure, probable component of the WASH complex. Component of the DHIC (ddl-1-containing hsf-1 inhibitory complex), which contains at least ddl-1, ddl-2, hsb-1 and hsf-1. Within the complex, interacts with ddl-2. Within the complex, interacts with hsb-1. Within the complex, interacts with hsf-1. Formation of the DHIC may be dependent upon the Insulin/IGF-1-like signaling (IIS) mediated pathway. Post-translationally, phosphorylated. Phosphorylation on Thr-182 may promote DHIC complex dissociation and consequently the activation of heat-shock transcription factor hsf-1. Phosphorylation is modulated by the Insulin/IGF-1-like signaling (IIS) mediated pathway. As to expression, expressed in pharynx, intestine, body wall muscles, vulva muscles, spermatheca, and several head and tail neurons.

In terms of biological role, acts as a component of the WASH core complex that functions as a nucleation-promoting factor (NPF) at the surface of endosomes, where it recruits and activates the Arp2/3 complex to induce actin polymerization, playing a key role in the fission of tubules that serve as transport intermediates during endosome sorting. Acts as a component of the DHIC (ddl-1-containing hsf-1 inhibitory complex) which modulates lifespan by sequestering the heat-shock transcription factor hsf-1 to negatively regulate its binding to DNA and its transcriptional activity. This is WASH complex subunit homolog 3 (ddl-1) from Caenorhabditis elegans.